A 412-amino-acid polypeptide reads, in one-letter code: Putative F-box protein At3g22940 (412 aa).

In terms of domain architecture, F-box spans 1-38 (MPLEEILSRLPLKSTRAVRSTCKKWDSLFKNRSFISKA).

The polypeptide is Putative F-box protein At3g22940 (Arabidopsis thaliana (Mouse-ear cress)).